Reading from the N-terminus, the 197-residue chain is Phosphoheptose isomerase (197 aa).

The SIS domain occupies 40–197 (CIASIAQGGK…LVEHSIFGKQ (158 aa)). Substrate is bound at residue 55-57 (NGG). Residues H64 and E68 each coordinate Zn(2+). Residues E68, 97 to 98 (ND), 123 to 125 (STS), S128, and Q175 each bind substrate. Q175 and H183 together coordinate Zn(2+).

The protein belongs to the SIS family. GmhA subfamily. Homotetramer. Zn(2+) is required as a cofactor.

It localises to the cytoplasm. It carries out the reaction 2 D-sedoheptulose 7-phosphate = D-glycero-alpha-D-manno-heptose 7-phosphate + D-glycero-beta-D-manno-heptose 7-phosphate. It functions in the pathway carbohydrate biosynthesis; D-glycero-D-manno-heptose 7-phosphate biosynthesis; D-glycero-alpha-D-manno-heptose 7-phosphate and D-glycero-beta-D-manno-heptose 7-phosphate from sedoheptulose 7-phosphate: step 1/1. It participates in capsule biogenesis; capsule polysaccharide biosynthesis. Catalyzes the isomerization of sedoheptulose 7-phosphate in D-glycero-D-manno-heptose 7-phosphate. The sequence is that of Phosphoheptose isomerase from Burkholderia mallei (strain ATCC 23344).